The sequence spans 283 residues: MLIQAVGVNLPPSYVCLEGPLGGERPRAQGDEMLMQRLLPAVREALDEAAVKPEEIDLIVGLALSPDHLIENRDIMAPKIGHPLQKVLGANRAHVFDLTDSSLARALYVVDTLASDQGYRNVLVVRGESSQGLEVDSESGFALADGALALLCRPTGKAAFRRGALGGDPAQEWLPLSIPLNTDIRQVGDVKGHLNLPAQPGLPEAVRAGFTRLAGDFPQLNWVREEWFGQGRPDGRCLGPFELASQLRAAQRDRLDELLLISFDPFGMVVEGVTLELAGEAHA.

Belongs to the thiolase-like superfamily. FabH family. Forms a tight complex with PqsC.

It is found in the cytoplasm. With respect to regulation, activity of the complex is inhibited by 2-aminoacetophenone (2-AA). Its function is as follows. Required for the biosynthesis of the quorum-sensing signaling molecules 2-heptyl-4(1H)-quinolone (HHQ) and 2-heptyl-3-hydroxy-4(1H)-quinolone (Pseudomonas quinolone signal or PQS), which are important for biofilm formation and virulence. The PqsC/PqsB complex catalyzes the condensation of 2-aminobenzoylacetate (2-ABA) and octanoyl-CoA to form HHQ. PqsB, together with PqsC, catalyzes the coupling of 2-ABA with the octanoate group, leading to decarboxylation and dehydration, and resulting in closure of the quinoline ring. PqsB is probably required for the proper folding of PqsC rather than for a direct enzymatic role in the process. This chain is 2-heptyl-4(1H)-quinolone synthase subunit PqsB, found in Pseudomonas aeruginosa (strain ATCC 15692 / DSM 22644 / CIP 104116 / JCM 14847 / LMG 12228 / 1C / PRS 101 / PAO1).